The following is a 465-amino-acid chain: MLWTDCLTRLRQELSDNVFAMWIRPLVAEEVEGILRLYAPNPYWTRYIQENHLELISILAEQLSEGRVRQVEILVDSRPGSILSSSEQPATTTAALQTAPIPQPAKVKREPEPVANTAVSSKSSKKKLLNPQFTFSLFVEGRSNQMAAETCRKVLTQLGASQHNPLFLYGPTGLGKTHLMQAVGNALLQAKPNARVMYMTSESFVQDFVSSLQKGKVEEFKKNCRSLDLLLVDDIHLLAGKEASLVEFFYTFNALLDESKQIILTSDRYPKELTELDPRLVSRFSWGLSVGVEPPDIETRIEILLKKAENSGVDLPRNCALFIAQQVVANVRELEGALNKVVAISRFKGAPIDLDVVRESLKDVLAIRARTISVENIQRVVSEYFRIPLKELVGPKRTRIYARPRQLAMGLARELTGDSFPEIGMAFGGRDHSTVMHACEKVVSLREEDPIFDEDYKNLLRLLQS.

The segment at 1-87 is domain I, interacts with DnaA modulators; it reads MLWTDCLTRL…RPGSILSSSE (87 aa). The tract at residues 81–123 is disordered; the sequence is SILSSSEQPATTTAALQTAPIPQPAKVKREPEPVANTAVSSKS. The span at 88–100 shows a compositional bias: low complexity; the sequence is QPATTTAALQTAP. The domain II stretch occupies residues 88 to 127; sequence QPATTTAALQTAPIPQPAKVKREPEPVANTAVSSKSSKKK. The tract at residues 128–345 is domain III, AAA+ region; it reads LLNPQFTFSL…GALNKVVAIS (218 aa). Residues Gly-173, Gly-175, Lys-176, and Thr-177 each coordinate ATP. Residues 346–465 form a domain IV, binds dsDNA region; that stretch reads RFKGAPIDLD…YKNLLRLLQS (120 aa).

It belongs to the DnaA family. In terms of assembly, oligomerizes as a right-handed, spiral filament on DNA at oriC.

It is found in the cytoplasm. Plays an essential role in the initiation and regulation of chromosomal replication. ATP-DnaA binds to the origin of replication (oriC) to initiate formation of the DNA replication initiation complex once per cell cycle. Binds the DnaA box (a 9 base pair repeat at the origin) and separates the double-stranded (ds)DNA. Forms a right-handed helical filament on oriC DNA; dsDNA binds to the exterior of the filament while single-stranded (ss)DNA is stabiized in the filament's interior. The ATP-DnaA-oriC complex binds and stabilizes one strand of the AT-rich DNA unwinding element (DUE), permitting loading of DNA polymerase. After initiation quickly degrades to an ADP-DnaA complex that is not apt for DNA replication. Binds acidic phospholipids. The chain is Chromosomal replication initiator protein DnaA from Acinetobacter baumannii (strain AB307-0294).